A 109-amino-acid polypeptide reads, in one-letter code: Aquaporin-2 (109 aa).

Topologically, residues 1-6 (SIAFSR) are cytoplasmic. The helical transmembrane segment at 7-27 (AVFTEFLATLLFVFFGLGSAL) threads the bilayer. Over 28–35 (NWPQALPS) the chain is Extracellular. A helical transmembrane segment spans residues 36-54 (VLQIAMAFGLAIGTLVQML). The Cytoplasmic portion of the chain corresponds to 55–59 (GHISG). An intramembrane region (discontinuously helical) is located at residues 60–69 (AHINPAVTVA). The NPA 1 motif lies at 63–65 (NPA). The Cytoplasmic segment spans residues 70–80 (CLVGCHISFLR). The helical transmembrane segment at 81 to 102 (AAFYVAAQLLGAVAGAALLHEV) threads the bilayer. The Extracellular portion of the chain corresponds to 103–109 (TPPSIRG).

The protein belongs to the MIP/aquaporin (TC 1.A.8) family. In terms of assembly, homotetramer. Post-translationally, serine phosphorylation is necessary and sufficient for expression at the apical membrane. Endocytosis is not phosphorylation-dependent. N-glycosylated.

The protein localises to the apical cell membrane. Its subcellular location is the basolateral cell membrane. It localises to the cell membrane. It is found in the cytoplasmic vesicle membrane. The protein resides in the golgi apparatus. The protein localises to the trans-Golgi network membrane. It carries out the reaction H2O(in) = H2O(out). The enzyme catalyses glycerol(in) = glycerol(out). Functionally, forms a water-specific channel that provides the plasma membranes of renal collecting duct with high permeability to water, thereby permitting water to move in the direction of an osmotic gradient. Plays an essential role in renal water homeostasis. Could also be permeable to glycerol. The sequence is that of Aquaporin-2 from Erinaceus europaeus (Western European hedgehog).